A 413-amino-acid chain; its full sequence is Serine/threonine transporter SstT (413 aa).

A run of 9 helical transmembrane segments spans residues Ile11–Ala31, Phe43–Leu63, Ile82–Phe102, Ala141–Met161, Ile192–Gly212, Leu216–Val236, Met298–Ile318, Ala339–Ile359, and Val363–Thr383.

Belongs to the dicarboxylate/amino acid:cation symporter (DAACS) (TC 2.A.23) family.

It localises to the cell inner membrane. The enzyme catalyses L-serine(in) + Na(+)(in) = L-serine(out) + Na(+)(out). It catalyses the reaction L-threonine(in) + Na(+)(in) = L-threonine(out) + Na(+)(out). Its function is as follows. Involved in the import of serine and threonine into the cell, with the concomitant import of sodium (symport system). The sequence is that of Serine/threonine transporter SstT from Shewanella frigidimarina (strain NCIMB 400).